The chain runs to 302 residues: Succinate--CoA ligase [ADP-forming] subunit alpha (302 aa).

CoA is bound by residues 17–20 (TGST), lysine 43, and 96–98 (ITE). Tyrosine 159 contacts substrate. The active-site Tele-phosphohistidine intermediate is histidine 247.

The protein belongs to the succinate/malate CoA ligase alpha subunit family. In terms of assembly, heterotetramer of two alpha and two beta subunits.

The catalysed reaction is succinate + ATP + CoA = succinyl-CoA + ADP + phosphate. It carries out the reaction GTP + succinate + CoA = succinyl-CoA + GDP + phosphate. Its pathway is carbohydrate metabolism; tricarboxylic acid cycle; succinate from succinyl-CoA (ligase route): step 1/1. Functionally, succinyl-CoA synthetase functions in the citric acid cycle (TCA), coupling the hydrolysis of succinyl-CoA to the synthesis of either ATP or GTP and thus represents the only step of substrate-level phosphorylation in the TCA. The alpha subunit of the enzyme binds the substrates coenzyme A and phosphate, while succinate binding and nucleotide specificity is provided by the beta subunit. The polypeptide is Succinate--CoA ligase [ADP-forming] subunit alpha (Staphylococcus epidermidis (strain ATCC 12228 / FDA PCI 1200)).